Consider the following 480-residue polypeptide: REST corepressor 1 (480 aa).

Residues 1–105 (MPAMVEKGPE…GGGMRVGPQY (105 aa)) are disordered. Low complexity-rich tracts occupy residues 21–58 (AASA…AAAA) and 66–89 (SLAA…SGSS). Residues 72-251 (PNGNSGSNSW…RHARKQKRER (180 aa)) are interaction with HDAC1. Residues 97 to 183 (GGMRVGPQYQ…KSLADLPNFT (87 aa)) enclose the ELM2 domain. A Glycyl lysine isopeptide (Lys-Gly) (interchain with G-Cter in SUMO2) cross-link involves residue Lys-116. Ser-121 carries the phosphoserine modification. Residues 184–235 (PFPDEWTVEDKVLFEQAFSFHGKTFHRIQQMLPDKSIASLVKFYYSWKKTRT) enclose the SANT 1 domain. Residues 238 to 265 (SVMDRHARKQKREREESEDELEETNGSN) adopt a coiled-coil conformation. The segment at 238–308 (SVMDRHARKQ…AKNRAKRKPP (71 aa)) is disordered. At Ser-254 the chain carries Phosphoserine. Over residues 272–282 (DPNKESKKEVP) the composition is skewed to basic and acidic residues. Residues 290 to 378 (VKKEKHSTQA…LPEVIQKCNA (89 aa)) are interaction with KDM1A. Lys-291 participates in a covalent cross-link: Glycyl lysine isopeptide (Lys-Gly) (interchain with G-Cter in SUMO2). The stretch at 328 to 363 (ATTVLRQLDMELVSIKRQIQNIKQTNSALKEKLDGG) forms a coiled coil. Residues 375 to 426 (KCNARWTTEEQLLAVQAIRKYGRDFQAISDVIGNKSVVQVKNFFVNYRRRFN) form the SANT 2 domain. Residues 436 to 466 (AEHGKDETNGPANQKPVKSPESSIKIPEEED) form a disordered region. Ser-454 carries the phosphoserine modification. A Glycyl lysine isopeptide (Lys-Gly) (interchain with G-Cter in SUMO2) cross-link involves residue Lys-460.

The protein belongs to the CoREST family. As to quaternary structure, component of a BHC histone deacetylase complex that contains HDAC1, HDAC2, HMG20B/BRAF35, KDM1A, RCOR1/CoREST and PHF21A/BHC80. The BHC complex may also contain ZMYM2, ZNF217, ZMYM3, GSE1 and GTF2I. Interacts with REST. Interacts with the SMARCE1/BAF57, suggesting that the BHC complex may recruit the ATP-dependent chromatin-remodeling SWI-SNF complex. Interacts directly with GFI1 and GFI1B in a RCOR/GFI/KDM1A/HDAC complex. Interacts with INMS1. Interacts with SOX2. Expressed in the external germinal layer (EGL) and internal granular layer (IGL) of the cerebellum and in Purkinje cells (at protein level).

The protein resides in the nucleus. Its function is as follows. Essential component of the BHC complex, a corepressor complex that represses transcription of neuron-specific genes in non-neuronal cells. The BHC complex is recruited at RE1/NRSE sites by REST and acts by deacetylating and demethylating specific sites on histones, thereby acting as a chromatin modifier. In the BHC complex, it serves as a molecular beacon for the recruitment of molecular machinery, including MeCP2 and SUV39H1, that imposes silencing across a chromosomal interval. Plays a central role in demethylation of Lys-4 of histone H3 by promoting demethylase activity of KDM1A on core histones and nucleosomal substrates. It also protects KDM1A from the proteasome. Component of a RCOR/GFI/KDM1A/HDAC complex that suppresses, via histone deacetylase (HDAC) recruitment, a number of genes implicated in multilineage blood cell development and controls hematopoietic differentiation. This is REST corepressor 1 (Rcor1) from Mus musculus (Mouse).